The following is a 251-amino-acid chain: Ubiquinone/menaquinone biosynthesis C-methyltransferase UbiE (251 aa).

S-adenosyl-L-methionine contacts are provided by residues T74, D95, 123–124 (NA), and S140.

Belongs to the class I-like SAM-binding methyltransferase superfamily. MenG/UbiE family.

It catalyses the reaction a 2-demethylmenaquinol + S-adenosyl-L-methionine = a menaquinol + S-adenosyl-L-homocysteine + H(+). The catalysed reaction is a 2-methoxy-6-(all-trans-polyprenyl)benzene-1,4-diol + S-adenosyl-L-methionine = a 5-methoxy-2-methyl-3-(all-trans-polyprenyl)benzene-1,4-diol + S-adenosyl-L-homocysteine + H(+). The protein operates within quinol/quinone metabolism; menaquinone biosynthesis; menaquinol from 1,4-dihydroxy-2-naphthoate: step 2/2. It participates in cofactor biosynthesis; ubiquinone biosynthesis. In terms of biological role, methyltransferase required for the conversion of demethylmenaquinol (DMKH2) to menaquinol (MKH2) and the conversion of 2-polyprenyl-6-methoxy-1,4-benzoquinol (DDMQH2) to 2-polyprenyl-3-methyl-6-methoxy-1,4-benzoquinol (DMQH2). This Klebsiella pneumoniae subsp. pneumoniae (strain ATCC 700721 / MGH 78578) protein is Ubiquinone/menaquinone biosynthesis C-methyltransferase UbiE.